Here is a 467-residue protein sequence, read N- to C-terminus: RuvB-like helicase 2 (467 aa).

Residue 73–80 coordinates ATP; it reads GPPSTGKT.

The protein belongs to the RuvB family. In terms of assembly, may form heterododecamers with RVB1. Component of the SWR1 chromatin remodeling complex, the INO80 chromatin remodeling complex, and of the R2TP complex.

It is found in the nucleus. The catalysed reaction is ATP + H2O = ADP + phosphate + H(+). Its function is as follows. DNA helicase which participates in several chromatin remodeling complexes, including the SWR1 and the INO80 complexes. The SWR1 complex mediates the ATP-dependent exchange of histone H2A for the H2A variant HZT1 leading to transcriptional regulation of selected genes by chromatin remodeling. The INO80 complex remodels chromatin by shifting nucleosomes and is involved in DNA repair. Also involved in pre-rRNA processing. The chain is RuvB-like helicase 2 (RVB2) from Kluyveromyces lactis (strain ATCC 8585 / CBS 2359 / DSM 70799 / NBRC 1267 / NRRL Y-1140 / WM37) (Yeast).